Consider the following 346-residue polypeptide: tRNA N6-adenosine threonylcarbamoyltransferase (346 aa).

His-111 and His-115 together coordinate Fe cation. Substrate contacts are provided by residues 134 to 138, Asp-167, Gly-180, Asp-184, and Asn-279; that span reads LVSGG. Position 307 (Asp-307) interacts with Fe cation.

It belongs to the KAE1 / TsaD family. It depends on Fe(2+) as a cofactor.

Its subcellular location is the cytoplasm. It carries out the reaction L-threonylcarbamoyladenylate + adenosine(37) in tRNA = N(6)-L-threonylcarbamoyladenosine(37) in tRNA + AMP + H(+). Its function is as follows. Required for the formation of a threonylcarbamoyl group on adenosine at position 37 (t(6)A37) in tRNAs that read codons beginning with adenine. Is involved in the transfer of the threonylcarbamoyl moiety of threonylcarbamoyl-AMP (TC-AMP) to the N6 group of A37, together with TsaE and TsaB. TsaD likely plays a direct catalytic role in this reaction. This is tRNA N6-adenosine threonylcarbamoyltransferase from Nostoc sp. (strain PCC 7120 / SAG 25.82 / UTEX 2576).